The following is a 1500-amino-acid chain: ABC transporter G family member 42 (1500 aa).

The tract at residues 26-56 is disordered; that stretch reads VDEAFMPQNSGGGGGSRGRRRSGRGGTADDD. One can recognise an ABC transporter 1 domain in the interval 182–455; the sequence is LGLVGVRPGR…FESCGFRCPE (274 aa). 215 to 222 provides a ligand contact to ATP; that stretch reads GPPSSGKT. The 214-residue stretch at 533–746 folds into the ABC transmembrane type-2 1 domain; sequence ELLKASFAKE…GYNALAVNEF (214 aa). The next 7 helical transmembrane spans lie at 551–571, 584–604, 639–659, 670–690, 695–715, 724–744, and 783–803; these read FVYI…STVF, GFVY…NGFA, IPFS…TIGF, LLLV…TAGL, IIAQ…GGFL, WWIW…LAVN, and FWIG…LFTL. Positions 822-834 are enriched in basic and acidic residues; that stretch reads TAKEAEGNGDARH. A disordered region spans residues 822-850; it reads TAKEAEGNGDARHTVRNGSTKSNGGNHKE. Over residues 837-846 the composition is skewed to polar residues; sequence RNGSTKSNGG. In terms of domain architecture, ABC transporter 2 spans 894–1151; sequence MSFDDVNYYV…KMIEYFEAIP (258 aa). Residue 939 to 946 coordinates ATP; sequence GVSGAGKT. One can recognise an ABC transmembrane type-2 2 domain in the interval 1224–1438; the sequence is GQFRACLWKQ…TVYGLIVTQY (215 aa). Helical transmembrane passes span 1245 to 1265, 1277 to 1297, 1331 to 1351, 1358 to 1378, 1388 to 1408, 1416 to 1436, and 1472 to 1492; these read LVRF…FWKI, MVIG…CATV, IPYV…MMSF, FFWF…YGMM, VAAI…GFFI, WWIW…LIVT, and VVAP…AICI.

It belongs to the ABC transporter superfamily. ABCG family. PDR (TC 3.A.1.205) subfamily.

The protein localises to the membrane. May be a general defense protein. This is ABC transporter G family member 42 from Oryza sativa subsp. japonica (Rice).